The sequence spans 345 residues: Solute carrier family 25 member 43 (345 aa).

Solcar repeat units follow at residues 11-100 (TSSQ…IDEL), 104-195 (SQWR…QERH), and 199-297 (TSLQ…LYRN). 6 helical membrane-spanning segments follow: residues 16–36 (LMCV…LEVV), 67–87 (FWKG…IHLA), 109–129 (IVAG…LEVV), 165–185 (GFSL…AVYI), 204–224 (FING…FETV), and 261–281 (VMAL…YFGL).

It belongs to the mitochondrial carrier (TC 2.A.29) family.

It localises to the mitochondrion inner membrane. This chain is Solute carrier family 25 member 43 (slc25a43), found in Danio rerio (Zebrafish).